The following is a 426-amino-acid chain: D-tagatose-1,6-bisphosphate aldolase subunit KbaZ (426 aa).

Belongs to the GatZ/KbaZ family. KbaZ subfamily. Forms a complex with KbaY.

It participates in carbohydrate metabolism; D-tagatose 6-phosphate degradation; D-glyceraldehyde 3-phosphate and glycerone phosphate from D-tagatose 6-phosphate: step 2/2. In terms of biological role, component of the tagatose-1,6-bisphosphate aldolase KbaYZ that is required for full activity and stability of the Y subunit. Could have a chaperone-like function for the proper and stable folding of KbaY. When expressed alone, KbaZ does not show any aldolase activity. The sequence is that of D-tagatose-1,6-bisphosphate aldolase subunit KbaZ from Escherichia coli O8 (strain IAI1).